The chain runs to 64 residues: MAQEQTKRGGGGGDDEDVTGTTAAGQERREKLAQDTDDLLDEIDDVLEENAEDFVRAYVQKGGQ.

The tract at residues 1 to 37 is disordered; the sequence is MAQEQTKRGGGGGDDEDVTGTTAAGQERREKLAQDTD. An ARC ATPase binding region spans residues 21-58; it reads TTAAGQERREKLAQDTDDLLDEIDDVLEENAEDFVRAY. The stretch at 25–52 forms a coiled coil; that stretch reads GQERREKLAQDTDDLLDEIDDVLEENAE. Gln-64 is modified (deamidated glutamine). Gln-64 participates in a covalent cross-link: Isoglutamyl lysine isopeptide (Gln-Lys) (interchain with K-? in acceptor proteins).

The protein belongs to the prokaryotic ubiquitin-like protein family. As to quaternary structure, strongly interacts with the proteasome-associated ATPase ARC through a hydrophobic interface; the interacting region of Pup lies in its C-terminal half. There is one Pup binding site per ARC hexamer ring. Post-translationally, is modified by deamidation of its C-terminal glutamine to glutamate by the deamidase Dop, a prerequisite to the subsequent pupylation process.

It participates in protein degradation; proteasomal Pup-dependent pathway. In terms of biological role, protein modifier that is covalently attached to lysine residues of substrate proteins, thereby targeting them for proteasomal degradation. The tagging system is termed pupylation. This Mycobacterium marinum (strain ATCC BAA-535 / M) protein is Prokaryotic ubiquitin-like protein Pup.